The chain runs to 437 residues: Sorting nexin-30 (437 aa).

Residues 1–45 form a disordered region; the sequence is MAGGPPKALPSTGPQSLRDMPHPLAGSSSEEAVGGDSTPSPDLLM. A Phosphothreonine modification is found at Thr-38. Position 40 is a phosphoserine (Ser-40). The region spanning 89–210 is the PX domain; sequence RDLFVTVDDP…VFLTAKDLNA (122 aa). Positions 132, 134, 162, and 176 each coordinate a 1,2-diacyl-sn-glycero-3-phospho-(1D-myo-inositol-3-phosphate). The region spanning 234–437 is the BAR domain; the sequence is KLRSRPLEFA…PLLQEKQETK (204 aa).

The protein belongs to the sorting nexin family. Heterodimer; heterodimerizes with SNX4.

The protein localises to the early endosome membrane. Functionally, involved in the regulation of endocytosis and in several stages of intracellular trafficking. Together with SNX4, involved in autophagosome assembly. In Mus musculus (Mouse), this protein is Sorting nexin-30.